The primary structure comprises 599 residues: Elongation factor 4 (599 aa).

Residues 5-187 (SKIRNFSIVA…AIVKRLPAPT (183 aa)) enclose the tr-type G domain. Residues 17-22 (DHGKST) and 134-137 (NKID) contribute to the GTP site.

It belongs to the TRAFAC class translation factor GTPase superfamily. Classic translation factor GTPase family. LepA subfamily.

Its subcellular location is the cell inner membrane. It catalyses the reaction GTP + H2O = GDP + phosphate + H(+). Required for accurate and efficient protein synthesis under certain stress conditions. May act as a fidelity factor of the translation reaction, by catalyzing a one-codon backward translocation of tRNAs on improperly translocated ribosomes. Back-translocation proceeds from a post-translocation (POST) complex to a pre-translocation (PRE) complex, thus giving elongation factor G a second chance to translocate the tRNAs correctly. Binds to ribosomes in a GTP-dependent manner. The polypeptide is Elongation factor 4 (Ruegeria sp. (strain TM1040) (Silicibacter sp.)).